Here is a 350-residue protein sequence, read N- to C-terminus: MTHCFIRALLRQPVERTPVWMMRQAGRYLPEYREVRERAGSFMNLCTSPELACEVTLQPLERYRLDAAILFSDILTVPDAMGLGLEFVEGEGPRFRNPIRGAADIHRLGVPDPEAELAYVPAAVRLIKQRLGDRAPLIGFSGSPWTLATYMVEGGSSREFRKVKCLMYEEPALMHELLEKLADAVALYLNAQIAAGVDAVMVFDTWGGNLDTEHYLAFSLRYAERVRQQLRLTGRGRIPAIFFTKGGGQWLEAMADAGYDALGLDWTTDIGSARQRVGDRVALQGNLDPVALYARPEIIRGEVRKILERYGRGSGHVFNLGHGVTPDIKPEHVGAMIEAVHEFSPAFHRT.

Substrate-binding positions include 23-27, Asp73, Tyr150, Thr205, and His322; that span reads RQAGR.

It belongs to the uroporphyrinogen decarboxylase family. In terms of assembly, homodimer.

The protein resides in the cytoplasm. The enzyme catalyses uroporphyrinogen III + 4 H(+) = coproporphyrinogen III + 4 CO2. The protein operates within porphyrin-containing compound metabolism; protoporphyrin-IX biosynthesis; coproporphyrinogen-III from 5-aminolevulinate: step 4/4. In terms of biological role, catalyzes the decarboxylation of four acetate groups of uroporphyrinogen-III to yield coproporphyrinogen-III. The polypeptide is Uroporphyrinogen decarboxylase (Methylococcus capsulatus (strain ATCC 33009 / NCIMB 11132 / Bath)).